A 251-amino-acid chain; its full sequence is MPGKIRPLIAGNWKMNGLKASLGELAAIGKGAGEVWRRVDLLICPPATLIFPAAAAMIGSKVAIGGQDCHAEASGANTGDISAEMLADAGATYVIVGHSERRTDHGETDAVVRAKAEAAWRAGLVAIVCVGETRAERDAGRAAEVVGRQLDGSVPDGARAANLVVAYEPVWAIGTGLTPTSQDIEEIHAVIRQNLTGRFKAEGEGVRLLYGGSLKPANAAEILALANVNGGLIGGASLKAADFLAIAEACP.

Residue 12–14 (NWK) participates in substrate binding. His98 acts as the Electrophile in catalysis. Glu168 functions as the Proton acceptor in the catalytic mechanism. Substrate contacts are provided by residues Gly174, Ser213, and 234 to 235 (GG).

Belongs to the triosephosphate isomerase family. As to quaternary structure, homodimer.

The protein resides in the cytoplasm. It catalyses the reaction D-glyceraldehyde 3-phosphate = dihydroxyacetone phosphate. It participates in carbohydrate biosynthesis; gluconeogenesis. Its pathway is carbohydrate degradation; glycolysis; D-glyceraldehyde 3-phosphate from glycerone phosphate: step 1/1. Its function is as follows. Involved in the gluconeogenesis. Catalyzes stereospecifically the conversion of dihydroxyacetone phosphate (DHAP) to D-glyceraldehyde-3-phosphate (G3P). This chain is Triosephosphate isomerase, found in Afipia carboxidovorans (strain ATCC 49405 / DSM 1227 / KCTC 32145 / OM5) (Oligotropha carboxidovorans).